We begin with the raw amino-acid sequence, 183 residues long: Negative modulator of initiation of replication (183 aa).

Residues 90-91 (AV) are interaction with DNA.

Belongs to the SeqA family. Homodimer. Polymerizes to form helical filaments.

It is found in the cytoplasm. Functionally, negative regulator of replication initiation, which contributes to regulation of DNA replication and ensures that replication initiation occurs exactly once per chromosome per cell cycle. Binds to pairs of hemimethylated GATC sequences in the oriC region, thus preventing assembly of replication proteins and re-initiation at newly replicated origins. Repression is relieved when the region becomes fully methylated. The protein is Negative modulator of initiation of replication of Shewanella oneidensis (strain ATCC 700550 / JCM 31522 / CIP 106686 / LMG 19005 / NCIMB 14063 / MR-1).